Here is a 74-residue protein sequence, read N- to C-terminus: Translation initiation factor IF-1 (74 aa).

The 72-residue stretch at 1–72 (MAKQDAIEME…TKGRITYRLR (72 aa)) folds into the S1-like domain.

It belongs to the IF-1 family. Component of the 30S ribosomal translation pre-initiation complex which assembles on the 30S ribosome in the order IF-2 and IF-3, IF-1 and N-formylmethionyl-tRNA(fMet); mRNA recruitment can occur at any time during PIC assembly.

It is found in the cytoplasm. One of the essential components for the initiation of protein synthesis. Stabilizes the binding of IF-2 and IF-3 on the 30S subunit to which N-formylmethionyl-tRNA(fMet) subsequently binds. Helps modulate mRNA selection, yielding the 30S pre-initiation complex (PIC). Upon addition of the 50S ribosomal subunit IF-1, IF-2 and IF-3 are released leaving the mature 70S translation initiation complex. This is Translation initiation factor IF-1 from Acaryochloris marina (strain MBIC 11017).